We begin with the raw amino-acid sequence, 467 residues long: ATP synthase subunit beta (467 aa).

ATP is bound at residue 150–157; that stretch reads GGAGVGKT.

The protein belongs to the ATPase alpha/beta chains family. F-type ATPases have 2 components, CF(1) - the catalytic core - and CF(0) - the membrane proton channel. CF(1) has five subunits: alpha(3), beta(3), gamma(1), delta(1), epsilon(1). CF(0) has three main subunits: a(1), b(2) and c(9-12). The alpha and beta chains form an alternating ring which encloses part of the gamma chain. CF(1) is attached to CF(0) by a central stalk formed by the gamma and epsilon chains, while a peripheral stalk is formed by the delta and b chains.

The protein localises to the cell inner membrane. It carries out the reaction ATP + H2O + 4 H(+)(in) = ADP + phosphate + 5 H(+)(out). Functionally, produces ATP from ADP in the presence of a proton gradient across the membrane. The catalytic sites are hosted primarily by the beta subunits. The chain is ATP synthase subunit beta from Aliivibrio salmonicida (strain LFI1238) (Vibrio salmonicida (strain LFI1238)).